The sequence spans 265 residues: Serine protease ami (265 aa).

An N-terminal signal peptide occupies residues 1–21; the sequence is MNVSWALLAVVLVLTVATYEC. Asn-2 carries N-linked (GlcNAc...) asparagine glycosylation. The propeptide at 22 to 26 is activation peptide; that stretch reads RPRGR. A Peptidase S1 domain is found at 27–254; sequence ILGGQDSKAE…YKSWIMESMY (228 aa). A disulfide bridge connects residues Cys-52 and Cys-68. Residue His-67 is the Charge relay system of the active site. N-linked (GlcNAc...) asparagine glycosylation is found at Asn-71, Asn-74, and Asn-108. The active-site Charge relay system is Asp-115. Disulfide bonds link Cys-149–Cys-215, Cys-180–Cys-196, and Cys-205–Cys-230. Ser-209 serves as the catalytic Charge relay system. N-linked (GlcNAc...) asparagine glycosylation occurs at Asn-255.

It belongs to the peptidase S1 family.

The protein localises to the secreted. In terms of biological role, probable serine protease. The protein is Serine protease ami of Xenopus tropicalis (Western clawed frog).